The following is a 498-amino-acid chain: Probable cytosol aminopeptidase (498 aa).

Lys262 and Asp267 together coordinate Mn(2+). Lys274 is a catalytic residue. Positions 285, 344, and 346 each coordinate Mn(2+). Residue Arg348 is part of the active site.

This sequence belongs to the peptidase M17 family. Requires Mn(2+) as cofactor.

It is found in the cytoplasm. It catalyses the reaction Release of an N-terminal amino acid, Xaa-|-Yaa-, in which Xaa is preferably Leu, but may be other amino acids including Pro although not Arg or Lys, and Yaa may be Pro. Amino acid amides and methyl esters are also readily hydrolyzed, but rates on arylamides are exceedingly low.. It carries out the reaction Release of an N-terminal amino acid, preferentially leucine, but not glutamic or aspartic acids.. Its function is as follows. Presumably involved in the processing and regular turnover of intracellular proteins. Catalyzes the removal of unsubstituted N-terminal amino acids from various peptides. The sequence is that of Probable cytosol aminopeptidase from Phytoplasma mali (strain AT).